The following is a 978-amino-acid chain: Tyrosine-protein kinase transforming protein fms (978 aa).

The Extracellular segment spans residues 1–543 (RMPSGPGHYG…IGAHTPLPDE (543 aa)). 5 consecutive Ig-like C2-type domains span residues 55-134 (PVIQ…IHLY), 141-231 (PWKV…KVQK), 236-331 (PATL…RVVE), 333-431 (AYSN…LTLR), and 434-533 (PEVR…WPIS). Residues cysteine 76 and cysteine 118 are joined by a disulfide bond. Asparagine 79, asparagine 107, asparagine 128, asparagine 187, asparagine 309, asparagine 320, asparagine 336, asparagine 369, asparagine 444, asparagine 511, and asparagine 524 each carry an N-linked (GlcNAc...) asparagine; by host glycan. Disulfide bonds link cysteine 161/cysteine 211 and cysteine 258/cysteine 312. The cysteines at positions 451 and 516 are disulfide-linked. The chain crosses the membrane as a helical span at residues 544-568 (LLFTPVLLTCMSIMALLLLLLLLLL). Topologically, residues 569–978 (YKYKQKPKYQ…PWQRTPPVAR (410 aa)) are cytoplasmic. The Protein kinase domain maps to 613-942 (LQFGKTLGTG…PTFQQICSLL (330 aa)). ATP-binding positions include 619-627 (LGTGAFGKV) and lysine 647. Aspartate 810 functions as the Proton acceptor in the catalytic mechanism. Residue tyrosine 841 is modified to Phosphotyrosine; by autocatalysis. The segment at 952-978 (VPNYTNLPSSSSSRLLRPWQRTPPVAR) is disordered. A compositionally biased stretch (low complexity) spans 958–969 (LPSSSSSRLLRP). Threonine 973 is subject to Phosphothreonine.

The protein belongs to the protein kinase superfamily. Tyr protein kinase family. CSF-1/PDGF receptor subfamily.

The protein resides in the membrane. The catalysed reaction is L-tyrosyl-[protein] + ATP = O-phospho-L-tyrosyl-[protein] + ADP + H(+). Functionally, truncated version of the receptor for colony-stimulating factor 1 (CSF-1). The polypeptide is Tyrosine-protein kinase transforming protein fms (V-FMS) (Felidae (cat family)).